We begin with the raw amino-acid sequence, 372 residues long: Heat-inducible transcription repressor HrcA (372 aa).

Belongs to the HrcA family.

Functionally, negative regulator of class I heat shock genes (grpE-dnaK-dnaJ and groELS operons). Prevents heat-shock induction of these operons. This is Heat-inducible transcription repressor HrcA from Chloroflexus aurantiacus (strain ATCC 29366 / DSM 635 / J-10-fl).